The sequence spans 920 residues: Chitin synthase C (920 aa).

2 disordered regions span residues 1-41 (MSYN…NAYQ) and 140-173 (IPML…SPAP). The span at 154 to 163 (YSDEYQVEEQ) shows a compositional bias: acidic residues. A run of 5 helical transmembrane segments spans residues 466–486 (SAFG…FVAL), 564–584 (RWLN…YQIW), 608–628 (LFAW…TTYL), 640–660 (VLGV…FVLA), and 675–695 (MVYF…FVTV). N-linked (GlcNAc...) asparagine glycosylation is present at Asn-715. Transmembrane regions (helical) follow at residues 718–738 (FFTI…ASII), 749–769 (FIQY…YAFC), 847–867 (AVVL…LSAA), and 892–912 (VVLW…LWYL).

This sequence belongs to the chitin synthase family. Class I subfamily.

The protein resides in the cell membrane. The catalysed reaction is [(1-&gt;4)-N-acetyl-beta-D-glucosaminyl](n) + UDP-N-acetyl-alpha-D-glucosamine = [(1-&gt;4)-N-acetyl-beta-D-glucosaminyl](n+1) + UDP + H(+). Polymerizes chitin, a structural polymer of the cell wall and septum, by transferring the sugar moiety of UDP-GlcNAc to the non-reducing end of the growing chitin polymer. Involved in hyphal growth. In Aspergillus oryzae (strain ATCC 42149 / RIB 40) (Yellow koji mold), this protein is Chitin synthase C.